The primary structure comprises 124 residues: Glycine cleavage system H protein (124 aa).

Positions 19 to 101 (VATVGITNHA…EGEGWLFKME (83 aa)) constitute a Lipoyl-binding domain. An N6-lipoyllysine modification is found at Lys-60.

It belongs to the GcvH family. In terms of assembly, the glycine cleavage system is composed of four proteins: P, T, L and H. Requires (R)-lipoate as cofactor.

The glycine cleavage system catalyzes the degradation of glycine. The H protein shuttles the methylamine group of glycine from the P protein to the T protein. The polypeptide is Glycine cleavage system H protein (Thermotoga maritima (strain ATCC 43589 / DSM 3109 / JCM 10099 / NBRC 100826 / MSB8)).